A 67-amino-acid polypeptide reads, in one-letter code: Probable Sec-independent protein translocase protein TatE (67 aa).

Residues 1 to 21 (MEGISLAKLLIVGALIVLLFG) form a helical membrane-spanning segment. A disordered region spans residues 43–67 (MNDDSDATSKTASEDKNAGQAVHKE). Residues 54-67 (ASEDKNAGQAVHKE) are compositionally biased toward basic and acidic residues.

This sequence belongs to the TatA/E family. TatE subfamily.

The protein localises to the cell inner membrane. Part of the twin-arginine translocation (Tat) system that transports large folded proteins containing a characteristic twin-arginine motif in their signal peptide across membranes. TatE shares overlapping functions with TatA. In Erwinia tasmaniensis (strain DSM 17950 / CFBP 7177 / CIP 109463 / NCPPB 4357 / Et1/99), this protein is Probable Sec-independent protein translocase protein TatE.